The primary structure comprises 165 residues: Sulfopyruvate decarboxylase subunit alpha (165 aa).

It belongs to the ComD family. As to quaternary structure, heterododecamer composed of 6 subunits alpha and 6 subunits beta.

It carries out the reaction 3-sulfopyruvate + H(+) = sulfoacetaldehyde + CO2. Its pathway is cofactor biosynthesis; coenzyme M biosynthesis; sulfoacetaldehyde from phosphoenolpyruvate and sulfite: step 4/4. In terms of biological role, involved in the biosynthesis of the coenzyme M (2-mercaptoethanesulfonic acid). Catalyzes the decarboxylation of sulfopyruvate to sulfoacetaldehyde. The chain is Sulfopyruvate decarboxylase subunit alpha from Methanothermobacter thermautotrophicus (strain ATCC 29096 / DSM 1053 / JCM 10044 / NBRC 100330 / Delta H) (Methanobacterium thermoautotrophicum).